The following is a 488-amino-acid chain: Glutamyl-tRNA(Gln) amidotransferase subunit A (488 aa).

Residues lysine 78 and serine 153 each act as charge relay system in the active site. The Acyl-ester intermediate role is filled by serine 177.

It belongs to the amidase family. GatA subfamily. As to quaternary structure, heterotrimer of A, B and C subunits.

The enzyme catalyses L-glutamyl-tRNA(Gln) + L-glutamine + ATP + H2O = L-glutaminyl-tRNA(Gln) + L-glutamate + ADP + phosphate + H(+). Functionally, allows the formation of correctly charged Gln-tRNA(Gln) through the transamidation of misacylated Glu-tRNA(Gln) in organisms which lack glutaminyl-tRNA synthetase. The reaction takes place in the presence of glutamine and ATP through an activated gamma-phospho-Glu-tRNA(Gln). The protein is Glutamyl-tRNA(Gln) amidotransferase subunit A of Caldanaerobacter subterraneus subsp. tengcongensis (strain DSM 15242 / JCM 11007 / NBRC 100824 / MB4) (Thermoanaerobacter tengcongensis).